A 267-amino-acid chain; its full sequence is uncharacterized protein (267 aa).

This is an uncharacterized protein from Saccharomyces cerevisiae (strain ATCC 204508 / S288c) (Baker's yeast).